Consider the following 223-residue polypeptide: Ribonuclease 3 (223 aa).

Residues 4 to 127 form the RNase III domain; sequence LNRLEEHLGY…LMGAIYLESG (124 aa). Residue glutamate 40 participates in Mg(2+) binding. Residue aspartate 44 is part of the active site. Mg(2+) is bound by residues aspartate 113 and glutamate 116. Glutamate 116 is a catalytic residue. Residues 154-223 form the DRBM domain; the sequence is DYKTTLQEIT…AWKVLQGMNI (70 aa).

It belongs to the ribonuclease III family. Homodimer. It depends on Mg(2+) as a cofactor.

The protein localises to the cytoplasm. The catalysed reaction is Endonucleolytic cleavage to 5'-phosphomonoester.. Functionally, digests double-stranded RNA. Involved in the processing of primary rRNA transcript to yield the immediate precursors to the large and small rRNAs (23S and 16S). Processes some mRNAs, and tRNAs when they are encoded in the rRNA operon. Processes pre-crRNA and tracrRNA of type II CRISPR loci if present in the organism. This is Ribonuclease 3 from Campylobacter fetus subsp. fetus (strain 82-40).